A 141-amino-acid chain; its full sequence is MTIKRFFVCAGIMGCLSLNPAMAEWTGDARDGMFSGVVITQFHTGQIDNKPYFCIEGKQSAGSSISACSMKNSSVWGASFSTLYNQALYFYTTGQPVRIYYKPGVWTYPPFVKALTSNALVGLSTCTTSTECFGPDRKKNS.

A signal peptide spans M1–A23. N-glycoloyl-alpha-neuraminate contacts are provided by residues M33 to S35 and Q59. Residues Y89–G94 are hydrophobic patch important for binding to SubA. Y101 contacts N-glycoloyl-alpha-neuraminate.

In terms of assembly, forms a complex with SubA with the stoichiometry SubA1:SubB5 (called SubAB5). Each SubB subunit makes different contacts with the single SubA subunit. This subunit alone forms pentamers.

It localises to the secreted. The protein resides in the host cytoplasm. Its subcellular location is the host cytosol. The protein localises to the host endoplasmic reticulum lumen. Receptor-binding subunit of subtilase cytotoxin SubAB5. Required for receptor-binding and thus correct trafficking in the host cell. Has specificity for host glycans terminating in the sialic acid N-glycolyl-alpha-neuraminic acid (Neu5Gc); each subunit in the SubB pentamer binds one Neu5Gc. The protease subunit (SubA) cleaves host BiP/HSPA5, inducing the host endoplasmic reticulum stress response and eventual cell death. Culture supernatant of E.coli expressing both subA and subB are toxic for Vero cells (African green monkey kidney cell line), Chinese hamster ovary cells and Hct-8 cells (human colonic epithelial cell line); the subunits are not toxic individually. Purified SubAB5 is highly toxic, &lt;0.1 pg is able to kill at least 50% of 30'000 Vero cells in a microtiter plate assay after 3 days; no cytotoxicity is seen at 24 hours. Preabsorption with cells expressing a ganglioside GM2 mimic reduced cytotoxicity of SubAB5 by 93% in the Vero cytotoxicity assay. Intraperitoneal injection of 200 ng of purified SubAB5 kills mice; the higher the dose the faster the mice die. Animals injected with purified SubAB5 have microvascular thrombi in the brain and other organs, including the renal tubules and glomeruli. Mice fed E.coli cells expressing cloned SubAB5 experience drastic weight loss and appear ill and lethargic. SubB alone at 2.5 ug/ml causes vacuolation of Vero cells, which requires the V-type ATPase proton pump; treated cells die. Protein synthesis in Vero cells is transiently inhibited by SubAB5; both subunits are required for this effect. Inhibition of protein synthesis is prevented by brefeldin A; cells are arrested in the G1 phase. SubAB5 at 100 ng/ml induced caspase-dependent apoptosis in Vero cells through mitochondrial membrane damage. The polypeptide is Subtilase cytotoxin subunit B (Escherichia coli).